The following is a 428-amino-acid chain: Serine--tRNA ligase (428 aa).

231–233 serves as a coordination point for L-serine; sequence TAE. Residues 262–264 and V278 contribute to the ATP site; that span reads RRE. L-serine is bound at residue E285. Residue 349-352 participates in ATP binding; sequence EVSS. L-serine is bound at residue S384.

It belongs to the class-II aminoacyl-tRNA synthetase family. Type-1 seryl-tRNA synthetase subfamily. Homodimer. The tRNA molecule binds across the dimer.

It localises to the cytoplasm. It catalyses the reaction tRNA(Ser) + L-serine + ATP = L-seryl-tRNA(Ser) + AMP + diphosphate + H(+). The catalysed reaction is tRNA(Sec) + L-serine + ATP = L-seryl-tRNA(Sec) + AMP + diphosphate + H(+). It functions in the pathway aminoacyl-tRNA biosynthesis; selenocysteinyl-tRNA(Sec) biosynthesis; L-seryl-tRNA(Sec) from L-serine and tRNA(Sec): step 1/1. In terms of biological role, catalyzes the attachment of serine to tRNA(Ser). Is also able to aminoacylate tRNA(Sec) with serine, to form the misacylated tRNA L-seryl-tRNA(Sec), which will be further converted into selenocysteinyl-tRNA(Sec). The chain is Serine--tRNA ligase from Chlamydia trachomatis serovar A (strain ATCC VR-571B / DSM 19440 / HAR-13).